A 179-amino-acid chain; its full sequence is Translation initiation factor IF-3 (179 aa).

It belongs to the IF-3 family. In terms of assembly, monomer.

The protein resides in the cytoplasm. Functionally, IF-3 binds to the 30S ribosomal subunit and shifts the equilibrium between 70S ribosomes and their 50S and 30S subunits in favor of the free subunits, thus enhancing the availability of 30S subunits on which protein synthesis initiation begins. In Treponema pallidum (strain Nichols), this protein is Translation initiation factor IF-3.